Here is a 240-residue protein sequence, read N- to C-terminus: Uridylate kinase (240 aa).

Position 12-15 (12-15) interacts with ATP; that stretch reads KLSG. The tract at residues 20-25 is involved in allosteric activation by GTP; that stretch reads GDKGFG. Glycine 54 is a UMP binding site. Residues glycine 55 and arginine 59 each coordinate ATP. Residues aspartate 74 and 135-142 each bind UMP; that span reads TGSPYFST. Residues asparagine 163, tyrosine 169, and aspartate 172 each contribute to the ATP site.

This sequence belongs to the UMP kinase family. In terms of assembly, homohexamer.

It is found in the cytoplasm. It carries out the reaction UMP + ATP = UDP + ADP. It participates in pyrimidine metabolism; CTP biosynthesis via de novo pathway; UDP from UMP (UMPK route): step 1/1. With respect to regulation, allosterically activated by GTP. Inhibited by UTP. In terms of biological role, catalyzes the reversible phosphorylation of UMP to UDP. The polypeptide is Uridylate kinase (Levilactobacillus brevis (strain ATCC 367 / BCRC 12310 / CIP 105137 / JCM 1170 / LMG 11437 / NCIMB 947 / NCTC 947) (Lactobacillus brevis)).